A 225-amino-acid chain; its full sequence is 2-C-methyl-D-erythritol 4-phosphate cytidylyltransferase (225 aa).

This sequence belongs to the IspD/TarI cytidylyltransferase family. IspD subfamily.

The catalysed reaction is 2-C-methyl-D-erythritol 4-phosphate + CTP + H(+) = 4-CDP-2-C-methyl-D-erythritol + diphosphate. Its pathway is isoprenoid biosynthesis; isopentenyl diphosphate biosynthesis via DXP pathway; isopentenyl diphosphate from 1-deoxy-D-xylulose 5-phosphate: step 2/6. Catalyzes the formation of 4-diphosphocytidyl-2-C-methyl-D-erythritol from CTP and 2-C-methyl-D-erythritol 4-phosphate (MEP). This Clostridium perfringens (strain SM101 / Type A) protein is 2-C-methyl-D-erythritol 4-phosphate cytidylyltransferase.